A 224-amino-acid polypeptide reads, in one-letter code: Mammalian ependymin-related protein 1 (224 aa).

A signal peptide spans 1–37 (MPARAPRRLVQGPRGTWLLGSLWVWVLCGLGMAGSLG). 3 disulfide bridges follow: C42–C172, C88–C222, and C113–C210. N-linked (GlcNAc...) asparagine glycans are attached at residues N130 and N182.

This sequence belongs to the ependymin family. In terms of assembly, homodimer. Post-translationally, N-glycosylated; the glycan contains mannose-6-phosphate moieties. As to expression, detected in brain, small intestine and in soleus, extensor digitorum longus and white gastrocnemius (at protein level). Detected in brain and skeletal muscle, and at lower leavels in heart.

The protein localises to the lysosome lumen. Its subcellular location is the secreted. Its function is as follows. Binds anionic lipids and gangliosides at acidic pH. This chain is Mammalian ependymin-related protein 1 (Epdr1), found in Mus musculus (Mouse).